A 427-amino-acid chain; its full sequence is Serine--tRNA ligase (427 aa).

230-232 (TAE) provides a ligand contact to L-serine. 261–263 (RAE) serves as a coordination point for ATP. Glutamate 284 is a binding site for L-serine. 348–351 (EISS) is a binding site for ATP. L-serine is bound at residue serine 384.

It belongs to the class-II aminoacyl-tRNA synthetase family. Type-1 seryl-tRNA synthetase subfamily. In terms of assembly, homodimer. The tRNA molecule binds across the dimer.

The protein localises to the cytoplasm. It carries out the reaction tRNA(Ser) + L-serine + ATP = L-seryl-tRNA(Ser) + AMP + diphosphate + H(+). The enzyme catalyses tRNA(Sec) + L-serine + ATP = L-seryl-tRNA(Sec) + AMP + diphosphate + H(+). It participates in aminoacyl-tRNA biosynthesis; selenocysteinyl-tRNA(Sec) biosynthesis; L-seryl-tRNA(Sec) from L-serine and tRNA(Sec): step 1/1. Catalyzes the attachment of serine to tRNA(Ser). Is also able to aminoacylate tRNA(Sec) with serine, to form the misacylated tRNA L-seryl-tRNA(Sec), which will be further converted into selenocysteinyl-tRNA(Sec). The polypeptide is Serine--tRNA ligase (Syntrophomonas wolfei subsp. wolfei (strain DSM 2245B / Goettingen)).